The sequence spans 935 residues: Epstein-Barr nuclear antigen 3 (935 aa).

Disordered regions lie at residues 1–89, 342–373, 399–446, 611–634, and 883–908; these read MDKD…DLPG, HVEG…VSRG, TEQG…VPEP, KQAS…MEGP, and HGRP…DHEP. Acidic residues predominate over residues 10–19; it reads ALDDNMEEEV. Residues 20 to 29 show a composition bias toward polar residues; it reads PSTSVVQEQV. Positions 352 to 366 are enriched in acidic residues; the sequence is EESEDTESDGDDEDL. The span at 399–410 shows a compositional bias: basic and acidic residues; the sequence is TEQGKEVLEKAR. A compositionally biased stretch (polar residues) spans 431-440; the sequence is SDETATSHGS. Residues 615–630 show a composition bias toward low complexity; that stretch reads VEVQPPQVTQVSPQQP.

The protein belongs to the herpesviridae EBNA-3 family. In terms of assembly, interacts with human UCKL1. Interacts with host CTPB1; this interaction seems important for EBNA3-mediated transcriptional repression. Interacts with host RBPJ. Interacts with host USP12 and WDR48; these interactions form a deubiquitination-competent complex.

The protein localises to the host nucleus matrix. In terms of biological role, plays an essential role for activation and immortalization of human B-cells. Represses transcription of viral promoters TP1 and Cp through interaction with host RBPJ, and inhibits EBNA2-mediated activation of these promoters. Since Cp is the promoter for all EBNA mRNAs, EBNA3A probably contributes to a negative autoregulatory control loop. The chain is Epstein-Barr nuclear antigen 3 (EBNA3) from Homo sapiens (Human).